The primary structure comprises 277 residues: MADPWQECMDYAVTLARQAGEVVCEAIKNEMNVMLKSSPVDLVTATDQKVEKMLISSIKEKYPSHSFIGEESVAAGEKSILTDNPTWIIDPIDGTTNFVHRFPFVAVSIGFAVNKKIEFGVVYSCVEGKMYTARKGKGAFCNGQKLQVSQQEDITKSLLVTELGSSRTPETVRMVLSNMEKLFCIPVHGIRSVGTAAVNMCLVATGGADAYYEMGIHCWDVAGAGIIVTEAGGVLMDVTGGPFDLMSRRVIAANNRILAERIAKEIQVIPLQRDDED.

Positions 70, 90, 92, and 93 each coordinate Mg(2+). A substrate-binding site is contributed by E70. 92–95 (IDGT) is a substrate binding site. T168 bears the Phosphothreonine mark. Substrate contacts are provided by residues 194 to 196 (GTA), E213, and D220. A Mg(2+)-binding site is contributed by D220.

This sequence belongs to the inositol monophosphatase superfamily. In terms of assembly, homodimer. Requires Mg(2+) as cofactor.

It is found in the cytoplasm. The enzyme catalyses a myo-inositol phosphate + H2O = myo-inositol + phosphate. It carries out the reaction 1D-myo-inositol 1-phosphate + H2O = myo-inositol + phosphate. The catalysed reaction is 1D-myo-inositol 2-phosphate + H2O = myo-inositol + phosphate. It catalyses the reaction 1D-myo-inositol 3-phosphate + H2O = myo-inositol + phosphate. The enzyme catalyses 1D-myo-inositol 4-phosphate + H2O = myo-inositol + phosphate. It carries out the reaction 1D-myo-inositol 5-phosphate + H2O = myo-inositol + phosphate. The catalysed reaction is 1D-myo-inositol 6-phosphate + H2O = myo-inositol + phosphate. It catalyses the reaction scyllo-inositol 1-phosphate + H2O = scyllo-inositol + phosphate. The enzyme catalyses alpha-D-galactose 1-phosphate + H2O = D-galactose + phosphate. It carries out the reaction alpha-D-glucose 1-phosphate + H2O = D-glucose + phosphate. The catalysed reaction is D-glucose 6-phosphate + H2O = D-glucose + phosphate. It catalyses the reaction beta-D-fructose 1-phosphate + H2O = D-fructose + phosphate. The enzyme catalyses glycerol 2-phosphate + H2O = glycerol + phosphate. It carries out the reaction adenosine 2'-phosphate + H2O = adenosine + phosphate. Its pathway is polyol metabolism; myo-inositol biosynthesis; myo-inositol from D-glucose 6-phosphate: step 2/2. With respect to regulation, activity with myo-inositol monophosphates and D-galactose 1-phosphate is inhibited by Li(+), Ca(2+) and Mn(2+), but also by Mg(2+) at concentrations above 3 mM. Its function is as follows. Phosphatase involved in the dephosphorylation of myo-inositol monophosphates to generate myo-inositol. Is also able to dephosphorylate scyllo-inositol-phosphate, myo-inositol 1,4-diphosphate, scyllo-inositol-1,3-diphosphate and scyllo-inositol-1,4-diphosphate. Also dephosphorylates in vitro other sugar-phosphates including D-galactose-1-phosphate, glucose-1-phosphate, glucose-6-phosphate, fructose-1-phosphate, beta-glycerophosphate and 2'-AMP. Responsible for the provision of inositol required for synthesis of phosphatidylinositols and polyphosphoinositides, and involved in maintaining normal brain function. Has been implicated as the pharmacological target for lithium (Li(+)) action in brain, which is used to treat bipolar affective disorder. Is equally active with 1D-myo-inositol 1-phosphate, 1D-myo-inositol 3-phosphate and D-galactose 1-phosphate. The protein is Inositol monophosphatase 1 of Homo sapiens (Human).